The following is a 146-amino-acid chain: 3-hydroxyacyl-[acyl-carrier-protein] dehydratase FabZ (146 aa).

Residue histidine 49 is part of the active site.

It belongs to the thioester dehydratase family. FabZ subfamily.

It is found in the cytoplasm. The enzyme catalyses a (3R)-hydroxyacyl-[ACP] = a (2E)-enoyl-[ACP] + H2O. Involved in unsaturated fatty acids biosynthesis. Catalyzes the dehydration of short chain beta-hydroxyacyl-ACPs and long chain saturated and unsaturated beta-hydroxyacyl-ACPs. This is 3-hydroxyacyl-[acyl-carrier-protein] dehydratase FabZ from Pseudomonas putida (strain ATCC 700007 / DSM 6899 / JCM 31910 / BCRC 17059 / LMG 24140 / F1).